Here is a 329-residue protein sequence, read N- to C-terminus: Beta-ketoacyl-[acyl-carrier-protein] synthase III (329 aa).

Active-site residues include Cys113 and His256. The interval 257–261 (QANQR) is ACP-binding. The active site involves Asn286.

This sequence belongs to the thiolase-like superfamily. FabH family. In terms of assembly, homodimer.

The protein resides in the cytoplasm. It carries out the reaction malonyl-[ACP] + acetyl-CoA + H(+) = 3-oxobutanoyl-[ACP] + CO2 + CoA. It functions in the pathway lipid metabolism; fatty acid biosynthesis. In terms of biological role, catalyzes the condensation reaction of fatty acid synthesis by the addition to an acyl acceptor of two carbons from malonyl-ACP. Catalyzes the first condensation reaction which initiates fatty acid synthesis and may therefore play a role in governing the total rate of fatty acid production. Possesses both acetoacetyl-ACP synthase and acetyl transacylase activities. Its substrate specificity determines the biosynthesis of branched-chain and/or straight-chain of fatty acids. This chain is Beta-ketoacyl-[acyl-carrier-protein] synthase III, found in Natranaerobius thermophilus (strain ATCC BAA-1301 / DSM 18059 / JW/NM-WN-LF).